The chain runs to 127 residues: MPKSKELVSSSSSGSDSDSEVEKKLKRKKQVVPEKPVKKQKPGESSRALASSKQSSSSRDDNMFQIGKMRYVSVRDFKGKILIDIREYWMDSEGEMKPGRKGISLNMEQWSQLKEQISDIDDAVRKL.

A regulatory region spans residues 1 to 50 (MPKSKELVSSSSSGSDSDSEVEKKLKRKKQVVPEKPVKKQKPGESSRALA). Positions 1 to 62 (MPKSKELVSS…KQSSSSRDDN (62 aa)) are disordered. Residues serine 4, serine 9, serine 10, serine 11, serine 13, serine 15, serine 17, and serine 19 each carry the phosphoserine modification. The span at 7–16 (LVSSSSSGSD) shows a compositional bias: low complexity. Positions 31-44 (VVPEKPVKKQKPGE) are enriched in basic and acidic residues. N6-acetyllysine is present on residues lysine 35 and lysine 53. Over residues 45–57 (SSRALASSKQSSS) the composition is skewed to low complexity. A phosphoserine mark is found at serine 55, serine 56, serine 57, and serine 58. Lysine 68 bears the N6-acetyllysine; alternate mark. Lysine 68 participates in a covalent cross-link: Glycyl lysine isopeptide (Lys-Gly) (interchain with G-Cter in SUMO1); alternate. A Glycyl lysine isopeptide (Lys-Gly) (interchain with G-Cter in SUMO2); alternate cross-link involves residue lysine 68. An interaction with ssDNA region spans residues 77 to 101 (FKGKILIDIREYWMDSEGEMKPGRK). At serine 118 the chain carries Phosphoserine.

The protein belongs to the transcriptional coactivator PC4 family. As to quaternary structure, homodimer. Interacts with CSTF2. Activity is controlled by protein kinases that target the regulatory region. Phosphorylation inactivates both ds DNA-binding and cofactor function, but does not affect binding to ssDNA.

It is found in the nucleus. In terms of biological role, general coactivator that functions cooperatively with TAFs and mediates functional interactions between upstream activators and the general transcriptional machinery. May be involved in stabilizing the multiprotein transcription complex. Binds single-stranded DNA. Also binds, in vitro, non-specifically to double-stranded DNA (ds DNA). This Rattus norvegicus (Rat) protein is Activated RNA polymerase II transcriptional coactivator p15 (Sub1).